Here is a 160-residue protein sequence, read N- to C-terminus: Phosphopantetheine adenylyltransferase (160 aa).

T10 contributes to the substrate binding site. ATP contacts are provided by residues 10 to 11 and H18; that span reads TF. 3 residues coordinate substrate: K42, L74, and R88. ATP contacts are provided by residues 89–91, E99, and 124–130; these read GLR and NSFISST.

This sequence belongs to the bacterial CoaD family. Homohexamer. Mg(2+) is required as a cofactor.

It localises to the cytoplasm. It carries out the reaction (R)-4'-phosphopantetheine + ATP + H(+) = 3'-dephospho-CoA + diphosphate. The protein operates within cofactor biosynthesis; coenzyme A biosynthesis; CoA from (R)-pantothenate: step 4/5. Functionally, reversibly transfers an adenylyl group from ATP to 4'-phosphopantetheine, yielding dephospho-CoA (dPCoA) and pyrophosphate. This chain is Phosphopantetheine adenylyltransferase, found in Aeromonas salmonicida (strain A449).